A 155-amino-acid polypeptide reads, in one-letter code: Transcription antitermination protein NusB (155 aa).

This sequence belongs to the NusB family.

In terms of biological role, involved in transcription antitermination. Required for transcription of ribosomal RNA (rRNA) genes. Binds specifically to the boxA antiterminator sequence of the ribosomal RNA (rrn) operons. The chain is Transcription antitermination protein NusB from Vibrio campbellii (strain ATCC BAA-1116).